The following is a 182-amino-acid chain: Dipetalodipin (182 aa).

The signal sequence occupies residues 1-18 (MKTIIAAIFLGILMHAFA). Cystine bridges form between Cys-21–Cys-134, Cys-55–Cys-181, and Cys-87–Cys-103.

It belongs to the calycin superfamily. Triabin family. Expressed in salivary glands.

The protein resides in the secreted. Inhibits platelet aggregation, vasoconstriction, and angiogenesis through binding to distinct eicosanoids involved in inflammation (acts as a scavenger), and has a role in inhibiting host innate immunity by impairing platelet-assisted formation of neutrophil extracellular traps (NETs). Inhibits platelet aggregation by collagen (IC(50)=30 nM), thromboxane A2 mimetic (TXA2 mimetic), or arachidonic acid (AA) without affecting aggregation induced by ADP, convulxin (GP6 agonist), PMA, and ristocetin (vWF-dependent platelet agglutinator). Binds with high affinity to TXA2, TXB2, prostaglandine H2 mimetic (PGH2 mimetic), PGD2, PGJ2, and PGF2alpha. Also interacts with 15(S)-hydroxyeicosatetraenoic acid (HETE), being the first calycin/lipocalin described to date to bind to a derivative of 15-lipoxygenase. Binding is not observed to other prostaglandins, leukotrienes, HETEs, lipids, and biogenic amines. It prevents contraction of rat uterus stimulated by PGF2alpha and induces relaxation of aorta previously contracted with TXA2 mimetic. In addition, it inhibits angiogenesis mediated by 15(S)-HETE and does not enhance inhibition of collagen-induced platelet aggregation by SQ29548 (TXA2 antagonist) and indomethacin. Also impairs platelet-assisted formation of neutrophil extracellular traps (NETs). NETs are web-like structures of DNA and proteins that play an important role in killing of pathogens. In addition, NETs are implicated in thrombus formation. In vivo, this protein exhibits antithrombotic activity in two distinct mice models that are highly dependent on platelets. It is noteworthy that it inhibits thrombosis without promoting excessive bleeding. The chain is Dipetalodipin from Dipetalogaster maximus (Blood-sucking bug).